A 956-amino-acid polypeptide reads, in one-letter code: MALKYHQQIISDLLEDSNGGLLILSSGLSLAKLIASLLILHSPSQGTLLLLLSPAAQSLKSRIIHYISSLDSPTPTEITADLPANQRYSLYTSGSPFFITPRILIVDLLTQRIPVSSLAGIFILNAHSISETSTEAFIIRIVKSLNSSAYIRAFSDRPQAMVSGFAKTERTMRALFLRKIHLWPRFQLDVSQELEREPPEVVDIRVSMSNYMVGIQKAIIEVMDACLKEMKKTNKVDVDDLTVESGLFKSFDEIVRRQLDPIWHTLGKRTKQLVSDLKTLRKLLDYLVRYDAVSFLKFLDTLRVSESYRSVWLFAESSYKIFDFAKKRVYRLVKASDVKSKEHVKNKSGKKRNSKGETDSVEAVGGETATNVATGVVVEEVLEEAPKWKVLREILEETQEERLKQAFSEEDNSDNNGIVLVACKDERSCMQLEDCITNNPQKVMREEWEMYLLSKIELRSMQTPQKKKQKTPKGFGILDGVVPVTTIQNSEGSSVGRQEHEALMAAASSIRKLGKTTDMASGNNNPEPHVDKASCTKGKAKKDPTSLRRSLRSCNKKTTNSKPEILPGPENEEKANEASTSAPQEANAVRPSGAKKLPPVHFYALESDQPILDILKPSVIIVYHPDMGFVRELEVYKAENPLRKLKVYFIFYDESTEVQKFEASIRRENEAFESLIRQKSSMIIPVDQDGLCMGSNSSTEFPASSTQNSLTRKAGGRKELEKETQVIVDMREFMSSLPNVLHQKGMKIIPVTLEVGDYILSPSICVERKSIQDLFQSFTSGRLFHQVEMMSRYYRIPVLLIEFSQDKSFSFQSSSDISDDVTPYNIISKLSLLVLHFPRLRLLWSRSLHATAEIFTTLKSNQDEPDETRAIRVGVPSEEGIIENDIRAENYNTSAVEFLRRLPGVSDANYRSIMEKCKSLAELASLPVETLAELMGGHKVAKSLREFLDAKYPTLL.

Positions 256 to 272 match the Nuclear localization signal motif; it reads RRQLDPIWHTLGKRTKQ. Disordered stretches follow at residues 343–363, 516–593, and 697–718; these read HVKNKSGKKRNSKGETDSVEA, TTDM…RPSG, and SSTEFPASSTQNSLTRKAGGRK. Residues 697–711 are compositionally biased toward polar residues; that stretch reads SSTEFPASSTQNSLT. In terms of domain architecture, ERCC4 spans 725–805; sequence QVIVDMREFM…IPVLLIEFSQ (81 aa).

This sequence belongs to the XPF family. Heterodimer with ERCC1/RAD10. As to expression, isoform 1 and isoform 2 are widely expressed, predominantly in flowers, meristems and stems. Isoform 3 is detected at low levels.

It localises to the nucleus. In terms of biological role, seems to be involved in nucleotide excision repair (NER) of damaged DNA (dark repair mechanism). Involved in repair of UV light, and probably oxidative damage. The UVH1/RAD1-ERCC1/RAD10 complex may act as an endonuclease making DNA incision 5' to the lesion site. In vitro, is implicated in double strand breaks (DSBs) repair and is required for homologous recombination in the presence of non-homologous overhangs. May mediate the induction of a DNA-damage sensitive cell-cycle checkpoint during the G2 phase. The sequence is that of DNA repair endonuclease UVH1 (UVH1) from Arabidopsis thaliana (Mouse-ear cress).